The chain runs to 129 residues: uncharacterized protein (129 aa).

The region spanning 3–109 (IFCKIINGEI…IPRYEGDGEV (107 aa)) is the HIT domain. A Histidine triad motif motif is present at residues 94–98 (HVHFH).

This is an uncharacterized protein from Methanocaldococcus jannaschii (strain ATCC 43067 / DSM 2661 / JAL-1 / JCM 10045 / NBRC 100440) (Methanococcus jannaschii).